Consider the following 592-residue polypeptide: Aspartate--tRNA(Asp/Asn) ligase (592 aa).

Position 173 (Glu-173) interacts with L-aspartate. Positions 197–200 are aspartate; it reads QLFK. Arg-219 is a binding site for L-aspartate. Residues 219-221 and Gln-228 each bind ATP; that span reads RDE. His-448 contacts L-aspartate. Glu-481 contacts ATP. L-aspartate is bound at residue Arg-488. An ATP-binding site is contributed by 533 to 536; sequence GLDR.

Belongs to the class-II aminoacyl-tRNA synthetase family. Type 1 subfamily. As to quaternary structure, homodimer.

It is found in the cytoplasm. It catalyses the reaction tRNA(Asx) + L-aspartate + ATP = L-aspartyl-tRNA(Asx) + AMP + diphosphate. Its function is as follows. Aspartyl-tRNA synthetase with relaxed tRNA specificity since it is able to aspartylate not only its cognate tRNA(Asp) but also tRNA(Asn). Reaction proceeds in two steps: L-aspartate is first activated by ATP to form Asp-AMP and then transferred to the acceptor end of tRNA(Asp/Asn). This Chromohalobacter salexigens (strain ATCC BAA-138 / DSM 3043 / CIP 106854 / NCIMB 13768 / 1H11) protein is Aspartate--tRNA(Asp/Asn) ligase.